The chain runs to 96 residues: Aspartyl/glutamyl-tRNA(Asn/Gln) amidotransferase subunit C (96 aa).

It belongs to the GatC family. As to quaternary structure, heterotrimer of A, B and C subunits.

The catalysed reaction is L-glutamyl-tRNA(Gln) + L-glutamine + ATP + H2O = L-glutaminyl-tRNA(Gln) + L-glutamate + ADP + phosphate + H(+). It carries out the reaction L-aspartyl-tRNA(Asn) + L-glutamine + ATP + H2O = L-asparaginyl-tRNA(Asn) + L-glutamate + ADP + phosphate + 2 H(+). In terms of biological role, allows the formation of correctly charged Asn-tRNA(Asn) or Gln-tRNA(Gln) through the transamidation of misacylated Asp-tRNA(Asn) or Glu-tRNA(Gln) in organisms which lack either or both of asparaginyl-tRNA or glutaminyl-tRNA synthetases. The reaction takes place in the presence of glutamine and ATP through an activated phospho-Asp-tRNA(Asn) or phospho-Glu-tRNA(Gln). This is Aspartyl/glutamyl-tRNA(Asn/Gln) amidotransferase subunit C from Deinococcus deserti (strain DSM 17065 / CIP 109153 / LMG 22923 / VCD115).